The primary structure comprises 115 residues: Large ribosomal subunit protein bL20 (115 aa).

Belongs to the bacterial ribosomal protein bL20 family.

Its function is as follows. Binds directly to 23S ribosomal RNA and is necessary for the in vitro assembly process of the 50S ribosomal subunit. It is not involved in the protein synthesizing functions of that subunit. The protein is Large ribosomal subunit protein bL20 of Cytophaga hutchinsonii (strain ATCC 33406 / DSM 1761 / CIP 103989 / NBRC 15051 / NCIMB 9469 / D465).